The primary structure comprises 634 residues: 1-deoxy-D-xylulose-5-phosphate synthase (634 aa).

Residues H74 and 115-117 (AHS) contribute to the thiamine diphosphate site. D146 contributes to the Mg(2+) binding site. Residues 147–148 (GA), N176, Y283, and E365 each bind thiamine diphosphate. Mg(2+) is bound at residue N176.

This sequence belongs to the transketolase family. DXPS subfamily. As to quaternary structure, homodimer. The cofactor is Mg(2+). Requires thiamine diphosphate as cofactor.

The catalysed reaction is D-glyceraldehyde 3-phosphate + pyruvate + H(+) = 1-deoxy-D-xylulose 5-phosphate + CO2. It functions in the pathway metabolic intermediate biosynthesis; 1-deoxy-D-xylulose 5-phosphate biosynthesis; 1-deoxy-D-xylulose 5-phosphate from D-glyceraldehyde 3-phosphate and pyruvate: step 1/1. Its function is as follows. Catalyzes the acyloin condensation reaction between C atoms 2 and 3 of pyruvate and glyceraldehyde 3-phosphate to yield 1-deoxy-D-xylulose-5-phosphate (DXP). The sequence is that of 1-deoxy-D-xylulose-5-phosphate synthase from Burkholderia pseudomallei (strain 668).